The primary structure comprises 72 residues: Translation initiation factor IF-1 (72 aa).

In terms of domain architecture, S1-like spans 1 to 72 (MSKEELLEFP…TKGRITYRFK (72 aa)).

This sequence belongs to the IF-1 family. Component of the 30S ribosomal translation pre-initiation complex which assembles on the 30S ribosome in the order IF-2 and IF-3, IF-1 and N-formylmethionyl-tRNA(fMet); mRNA recruitment can occur at any time during PIC assembly.

The protein resides in the cytoplasm. Its function is as follows. One of the essential components for the initiation of protein synthesis. Stabilizes the binding of IF-2 and IF-3 on the 30S subunit to which N-formylmethionyl-tRNA(fMet) subsequently binds. Helps modulate mRNA selection, yielding the 30S pre-initiation complex (PIC). Upon addition of the 50S ribosomal subunit IF-1, IF-2 and IF-3 are released leaving the mature 70S translation initiation complex. This chain is Translation initiation factor IF-1, found in Parvibaculum lavamentivorans (strain DS-1 / DSM 13023 / NCIMB 13966).